The primary structure comprises 556 residues: CTP synthase (556 aa).

The interval 1-266 (MKYIFVTGGV…GKVVEDLLGL (266 aa)) is amidoligase domain. S12 is a CTP binding site. Residue S12 coordinates UTP. Position 13-18 (13-18 (SLGKGV)) interacts with ATP. Y53 contributes to the L-glutamine binding site. ATP is bound at residue D70. Positions 70 and 140 each coordinate Mg(2+). CTP-binding positions include 147 to 149 (DIE), 187 to 192 (KTKPTQ), and K223. Residues 187–192 (KTKPTQ) and K223 contribute to the UTP site. The Glutamine amidotransferase type-1 domain occupies 291–544 (TIAIAGKYTE…VKAALRGQSS (254 aa)). Residue G356 coordinates L-glutamine. The Nucleophile; for glutamine hydrolysis role is filled by C383. Residues 384 to 387 (LGMQ), E407, and R467 each bind L-glutamine. Residues H517 and E519 contribute to the active site.

Belongs to the CTP synthase family. In terms of assembly, homotetramer.

It carries out the reaction UTP + L-glutamine + ATP + H2O = CTP + L-glutamate + ADP + phosphate + 2 H(+). It catalyses the reaction L-glutamine + H2O = L-glutamate + NH4(+). The catalysed reaction is UTP + NH4(+) + ATP = CTP + ADP + phosphate + 2 H(+). Its pathway is pyrimidine metabolism; CTP biosynthesis via de novo pathway; CTP from UDP: step 2/2. Allosterically activated by GTP, when glutamine is the substrate; GTP has no effect on the reaction when ammonia is the substrate. The allosteric effector GTP functions by stabilizing the protein conformation that binds the tetrahedral intermediate(s) formed during glutamine hydrolysis. Inhibited by the product CTP, via allosteric rather than competitive inhibition. Its function is as follows. Catalyzes the ATP-dependent amination of UTP to CTP with either L-glutamine or ammonia as the source of nitrogen. Regulates intracellular CTP levels through interactions with the four ribonucleotide triphosphates. The polypeptide is CTP synthase (Deinococcus deserti (strain DSM 17065 / CIP 109153 / LMG 22923 / VCD115)).